We begin with the raw amino-acid sequence, 364 residues long: Transcription factor SPEECHLESS (364 aa).

Positions 35–109 are disordered; sequence GEISPTAAST…QKMSHVTVER (75 aa). The residue at position 38 (Ser38) is a Phosphoserine; by ASK7. At Thr40 the chain carries Phosphothreonine; by ASK7. Polar residues predominate over residues 40–53; it reads TAASTPKDGTTSSK. The residue at position 43 (Ser43) is a Phosphoserine; by ASK7. Thr44 is modified (phosphothreonine; by ASK7). Position 65 is a phosphoserine; by ASK7 (Ser65). Over residues 79–92 the composition is skewed to acidic residues; sequence EDEEEEDGDGEAEE. A basic motif region spans residues 99–112; it reads QQKMSHVTVERNRR. A bHLH domain is found at 99-150; sequence QQKMSHVTVERNRRKQMNEHLTVLRSLMPCFYVKRGDQASIIGGVVEYISEL. The helix-loop-helix motif stretch occupies residues 113–150; it reads KQMNEHLTVLRSLMPCFYVKRGDQASIIGGVVEYISEL. Position 171 is a phosphoserine; by ASK7 (Ser171). The segment at 171–227 is disordered; that stretch reads SPRVVPSPRPSPPVLSPRKPPLSPRINHHQIHHHLLLPPISPRTPQPTSPYRAIPPQ. Residues 175–193 are compositionally biased toward pro residues; sequence VPSPRPSPPVLSPRKPPLS. Phosphoserine; by ASK7, MPK3 and MPK6 is present on Ser177. Ser181 is subject to Phosphoserine; by ASK7. Ser186 is modified (phosphoserine; by CDKA-1, ASK7, MPK3 and MPK6). Phosphoserine; by MPK3 and MPK6 is present on Ser193. The segment covering 196–205 has biased composition (basic residues); the sequence is INHHQIHHHL. Residues 209-218 show a composition bias toward pro residues; it reads PISPRTPQPT. Phosphoserine; by MPK3 and MPK6 is present on Ser211. Thr214 carries the phosphothreonine; by ASK7, MPK3 and MPK6 modification. Ser219 is subject to Phosphoserine; by ASK7, MPK3 and MPK6.

In terms of assembly, homodimer. Forms dimers with SCRM and SCRM2. May interact with CDKA-1. Phosphorylated by ASK7/BIN2 and ASK3/SK12; this post-translational modification inhibits activity and limit epidermal cell proliferation. Phosphorylation by MPK3 and MPK6 leads to the inhibition of stomatal fate and to degradation. Stabilized by CDKA-1-mediated phosphorylation at Ser-186 which promotes stomatal development. As to expression, expressed in developing leaf epidermis. Reduced accumulation in the stomatal lineage ground cells (SLGCs) where BASL is polarized in the cell cortex. Observed in small cells of non-protruding hypocotyl cell files and of developing cotyledon epidermis. Restricted to meristemoids (stomatal precursor cell) in leaves epidermis, mostly in dividing cells of non-protruding cell files.

Its subcellular location is the nucleus. With respect to regulation, negatively regulated through phosphorylation by the MAPK module. Activity is constrained by polarized BASL in stomatal lineage ground cells (SLGCs) undergoing ACD. Functionally, transcription factor acting as an integration node for stomata and brassinosteroid (BR) signaling pathways to control stomatal initiation and development. Activates transcription when in the presence of SCRM/ICE1. Functions as a dimer with SCRM or SCRM2 during stomatal initiation. Required for the initiation, the spacing and the formation of stomata, by promoting the first asymmetric cell divisions. Together with FMA and MUTE, modulates the stomata formation. Involved in the regulation of growth reduction under osmotic stress (e.g. mannitol), associated with a quick decrease of meristemoid mother cells (MMCs) number lower stomatal index and density. This is Transcription factor SPEECHLESS from Arabidopsis thaliana (Mouse-ear cress).